Here is a 294-residue protein sequence, read N- to C-terminus: tRNA dimethylallyltransferase (294 aa).

Residue G10 to T17 coordinates ATP. Substrate is bound at residue T12–T17. The segment at D35 to Q38 is interaction with substrate tRNA.

The protein belongs to the IPP transferase family. Monomer. Mg(2+) is required as a cofactor.

The enzyme catalyses adenosine(37) in tRNA + dimethylallyl diphosphate = N(6)-dimethylallyladenosine(37) in tRNA + diphosphate. Its function is as follows. Catalyzes the transfer of a dimethylallyl group onto the adenine at position 37 in tRNAs that read codons beginning with uridine, leading to the formation of N6-(dimethylallyl)adenosine (i(6)A). The protein is tRNA dimethylallyltransferase of Streptococcus pneumoniae serotype 19F (strain G54).